The primary structure comprises 219 residues: PKHD-type hydroxylase Mmar10_1675 (219 aa).

The Fe2OG dioxygenase domain maps to 77–171 (TLSRILVSRY…RVAVVGWVRS (95 aa)). Residues His-95, Asp-97, and His-152 each contribute to the Fe cation site. Arg-162 provides a ligand contact to 2-oxoglutarate.

The cofactor is Fe(2+). L-ascorbate is required as a cofactor.

This chain is PKHD-type hydroxylase Mmar10_1675, found in Maricaulis maris (strain MCS10) (Caulobacter maris).